Consider the following 355-residue polypeptide: Histidinol-phosphate aminotransferase 2 (355 aa).

An N6-(pyridoxal phosphate)lysine modification is found at K210.

It belongs to the class-II pyridoxal-phosphate-dependent aminotransferase family. Histidinol-phosphate aminotransferase subfamily. Homodimer. Pyridoxal 5'-phosphate serves as cofactor.

It catalyses the reaction L-histidinol phosphate + 2-oxoglutarate = 3-(imidazol-4-yl)-2-oxopropyl phosphate + L-glutamate. It functions in the pathway amino-acid biosynthesis; L-histidine biosynthesis; L-histidine from 5-phospho-alpha-D-ribose 1-diphosphate: step 7/9. The polypeptide is Histidinol-phosphate aminotransferase 2 (Gluconobacter oxydans (strain 621H) (Gluconobacter suboxydans)).